The chain runs to 466 residues: 3-isopropylmalate dehydratase large subunit (466 aa).

[4Fe-4S] cluster contacts are provided by cysteine 347, cysteine 407, and cysteine 410.

It belongs to the aconitase/IPM isomerase family. LeuC type 1 subfamily. As to quaternary structure, heterodimer of LeuC and LeuD. The cofactor is [4Fe-4S] cluster.

It carries out the reaction (2R,3S)-3-isopropylmalate = (2S)-2-isopropylmalate. The protein operates within amino-acid biosynthesis; L-leucine biosynthesis; L-leucine from 3-methyl-2-oxobutanoate: step 2/4. Functionally, catalyzes the isomerization between 2-isopropylmalate and 3-isopropylmalate, via the formation of 2-isopropylmaleate. This Blochmanniella floridana protein is 3-isopropylmalate dehydratase large subunit.